The sequence spans 98 residues: Prostate and testis expressed protein 3 (98 aa).

The first 20 residues, 1–20, serve as a signal peptide directing secretion; that stretch reads MNKHFLFLFLLYCLIVAVTS. One can recognise a UPAR/Ly6 domain in the interval 21 to 97; it reads LQCITCHLRT…CCNYNYCNFK (77 aa). 4 disulfide bridges follow: cysteine 23–cysteine 50, cysteine 26–cysteine 35, cysteine 42–cysteine 68, and cysteine 72–cysteine 88.

The protein belongs to the PATE family. Specifically expressed in prostate and testis.

Its subcellular location is the secreted. The chain is Prostate and testis expressed protein 3 (PATE3) from Homo sapiens (Human).